We begin with the raw amino-acid sequence, 261 residues long: Shikimate dehydrogenase (NADP(+)) (261 aa).

Shikimate contacts are provided by residues 13–15 and threonine 60; that span reads SLS. The Proton acceptor role is filled by lysine 64. Residues asparagine 85 and aspartate 100 each contribute to the shikimate site. Residues 121 to 125 and isoleucine 202 contribute to the NADP(+) site; that span reads GAGGA. Residue tyrosine 204 participates in shikimate binding. Glycine 225 contributes to the NADP(+) binding site.

The protein belongs to the shikimate dehydrogenase family. In terms of assembly, homodimer.

The enzyme catalyses shikimate + NADP(+) = 3-dehydroshikimate + NADPH + H(+). The protein operates within metabolic intermediate biosynthesis; chorismate biosynthesis; chorismate from D-erythrose 4-phosphate and phosphoenolpyruvate: step 4/7. In terms of biological role, involved in the biosynthesis of the chorismate, which leads to the biosynthesis of aromatic amino acids. Catalyzes the reversible NADPH linked reduction of 3-dehydroshikimate (DHSA) to yield shikimate (SA). The sequence is that of Shikimate dehydrogenase (NADP(+)) from Exiguobacterium sibiricum (strain DSM 17290 / CCUG 55495 / CIP 109462 / JCM 13490 / 255-15).